The primary structure comprises 249 residues: Ubiquinone biosynthesis O-methyltransferase (249 aa).

Residues arginine 41, glycine 72, aspartate 93, and methionine 136 each coordinate S-adenosyl-L-methionine.

This sequence belongs to the methyltransferase superfamily. UbiG/COQ3 family.

The enzyme catalyses a 3-demethylubiquinol + S-adenosyl-L-methionine = a ubiquinol + S-adenosyl-L-homocysteine + H(+). The catalysed reaction is a 3-(all-trans-polyprenyl)benzene-1,2-diol + S-adenosyl-L-methionine = a 2-methoxy-6-(all-trans-polyprenyl)phenol + S-adenosyl-L-homocysteine + H(+). It functions in the pathway cofactor biosynthesis; ubiquinone biosynthesis. In terms of biological role, O-methyltransferase that catalyzes the 2 O-methylation steps in the ubiquinone biosynthetic pathway. The protein is Ubiquinone biosynthesis O-methyltransferase of Methylobacterium nodulans (strain LMG 21967 / CNCM I-2342 / ORS 2060).